The primary structure comprises 199 residues: Imidazole glycerol phosphate synthase subunit HisH (199 aa).

A Glutamine amidotransferase type-1 domain is found at 1 to 199; the sequence is MTVVVDYEMG…QILKNLREML (199 aa). Cysteine 79 (nucleophile) is an active-site residue. Residues histidine 180 and glutamate 182 contribute to the active site.

As to quaternary structure, heterodimer of HisH and HisF.

It is found in the cytoplasm. The catalysed reaction is 5-[(5-phospho-1-deoxy-D-ribulos-1-ylimino)methylamino]-1-(5-phospho-beta-D-ribosyl)imidazole-4-carboxamide + L-glutamine = D-erythro-1-(imidazol-4-yl)glycerol 3-phosphate + 5-amino-1-(5-phospho-beta-D-ribosyl)imidazole-4-carboxamide + L-glutamate + H(+). It carries out the reaction L-glutamine + H2O = L-glutamate + NH4(+). Its pathway is amino-acid biosynthesis; L-histidine biosynthesis; L-histidine from 5-phospho-alpha-D-ribose 1-diphosphate: step 5/9. IGPS catalyzes the conversion of PRFAR and glutamine to IGP, AICAR and glutamate. The HisH subunit catalyzes the hydrolysis of glutamine to glutamate and ammonia as part of the synthesis of IGP and AICAR. The resulting ammonia molecule is channeled to the active site of HisF. This chain is Imidazole glycerol phosphate synthase subunit HisH, found in Carboxydothermus hydrogenoformans (strain ATCC BAA-161 / DSM 6008 / Z-2901).